The chain runs to 243 residues: Homeobox protein goosecoid isoform B (243 aa).

The segment at residues 148-207 is a DNA-binding region (homeobox); it reads KRRHRTIFTDEQLEALENLFQETKYPDVGTREQLARRVHLREEKVEVWFKNRRAKWRRQK. A disordered region spans residues 201–243; the sequence is AKWRRQKRSSSEESENAQKWNKSSKNSAEKRDEQAKSDLDSDS. Polar residues predominate over residues 217-226; sequence AQKWNKSSKN. The span at 227 to 243 shows a compositional bias: basic and acidic residues; that stretch reads SAEKRDEQAKSDLDSDS.

It belongs to the paired homeobox family. Bicoid subfamily.

It localises to the nucleus. Its function is as follows. Plays a central role in executing Spemann's organizer phenomenon (the dorsal blastopore lip of the early Xenopus laevis gastrula can organize a complete secondary body axis when transplanted to another embryo). The sequence is that of Homeobox protein goosecoid isoform B (gsc-b) from Xenopus laevis (African clawed frog).